Consider the following 97-residue polypeptide: Protein ParC (97 aa).

The polypeptide is Protein ParC (parC) (Escherichia coli).